Consider the following 426-residue polypeptide: Enolase (426 aa).

Gln163 contributes to the (2R)-2-phosphoglycerate binding site. Residue Glu205 is the Proton donor of the active site. Asp242, Glu285, and Asp312 together coordinate Mg(2+). Residues Lys337, Arg366, Ser367, and Lys388 each contribute to the (2R)-2-phosphoglycerate site. Catalysis depends on Lys337, which acts as the Proton acceptor.

Belongs to the enolase family. The cofactor is Mg(2+).

Its subcellular location is the cytoplasm. The protein localises to the secreted. The protein resides in the cell surface. The catalysed reaction is (2R)-2-phosphoglycerate = phosphoenolpyruvate + H2O. It participates in carbohydrate degradation; glycolysis; pyruvate from D-glyceraldehyde 3-phosphate: step 4/5. Functionally, catalyzes the reversible conversion of 2-phosphoglycerate (2-PG) into phosphoenolpyruvate (PEP). It is essential for the degradation of carbohydrates via glycolysis. This is Enolase from Caulobacter vibrioides (strain ATCC 19089 / CIP 103742 / CB 15) (Caulobacter crescentus).